Consider the following 516-residue polypeptide: Chromosomal replication initiator protein DnaA (516 aa).

Residues 1–72 (MSLEHWNLCL…LLSEFAGDDL (72 aa)) form a domain I, interacts with DnaA modulators region. Residues 72–179 (LAPALKLAVK…QVEGGINHGA (108 aa)) are domain II. The domain III, AAA+ region stretch occupies residues 180-396 (NLNNSFTFDN…GALKRVIANS (217 aa)). Residues Gly-224, Gly-226, Lys-227, and Thr-228 each coordinate ATP. The interval 397 to 516 (HFTGRAITPD…YKQLMRILTT (120 aa)) is domain IV, binds dsDNA.

Belongs to the DnaA family. As to quaternary structure, oligomerizes as a right-handed, spiral filament on DNA at oriC.

Its subcellular location is the cytoplasm. In terms of biological role, plays an essential role in the initiation and regulation of chromosomal replication. ATP-DnaA binds to the origin of replication (oriC) to initiate formation of the DNA replication initiation complex once per cell cycle. Binds the DnaA box (a 9 base pair repeat at the origin) and separates the double-stranded (ds)DNA. Forms a right-handed helical filament on oriC DNA; dsDNA binds to the exterior of the filament while single-stranded (ss)DNA is stabiized in the filament's interior. The ATP-DnaA-oriC complex binds and stabilizes one strand of the AT-rich DNA unwinding element (DUE), permitting loading of DNA polymerase. After initiation quickly degrades to an ADP-DnaA complex that is not apt for DNA replication. Binds acidic phospholipids. The sequence is that of Chromosomal replication initiator protein DnaA from Marinomonas sp. (strain MWYL1).